We begin with the raw amino-acid sequence, 442 residues long: MSYCPNTPEDIREMLAAIGVASVDALFAPIPAGLRARSFALPDGTSEQELLRQMKQLAGTDRPVTGFIGGGYYDHYIPAVVDHLSGRAEFYTAYTPYQPECSQGTLQALFEYQTAICRLTGMEVSNASLYDGGTALAEAAMMALRVTGRNRLVIDGSVNPFSREIVRTYLTNLGVEIVEIPARDGLADRPALTAALTDLTAAVILQNPNFFGSVEDLSDIALTAHANGALLIASVYPISLGLVKSPGAMGADIVVGDGQSLGNPLSFGGPSFGFIATTKKYIRNLPGRIIGETVDKSGRRGFVLTLQAREQHIKRHKATSNICSNQSLCALRGMIFLASVGKEGLVDLARLNRDKAEYAKGLLGSIKGVKLLNTAPTFNEFTIVLPKDAAEVAERLLGKGVAAGVPLGAYYHGMDNCLVVTVTEKRTRDEIDALAKELEGAL.

The protein belongs to the GcvP family. N-terminal subunit subfamily. The glycine cleavage system is composed of four proteins: P, T, L and H. In this organism, the P 'protein' is a heterodimer of two subunits.

It carries out the reaction N(6)-[(R)-lipoyl]-L-lysyl-[glycine-cleavage complex H protein] + glycine + H(+) = N(6)-[(R)-S(8)-aminomethyldihydrolipoyl]-L-lysyl-[glycine-cleavage complex H protein] + CO2. Its function is as follows. The glycine cleavage system catalyzes the degradation of glycine. The P protein binds the alpha-amino group of glycine through its pyridoxal phosphate cofactor; CO(2) is released and the remaining methylamine moiety is then transferred to the lipoamide cofactor of the H protein. This Geotalea uraniireducens (strain Rf4) (Geobacter uraniireducens) protein is Probable glycine dehydrogenase (decarboxylating) subunit 1.